The chain runs to 489 residues: Glucose-1-phosphate adenylyltransferase small subunit, chloroplastic/amyloplastic (489 aa).

Residues 1 to 52 (ITVPSTSSKNLQNSLAFSSSSLSGDKIQTTSFLNRRYCRISSRAPIVVSPKA) constitute a chloroplast transit peptide.

Belongs to the bacterial/plant glucose-1-phosphate adenylyltransferase family. Heterotetramer. Prominently expressed in the leaves. A lower level expression is seen in the roots.

The protein resides in the plastid. Its subcellular location is the chloroplast. It localises to the amyloplast. The enzyme catalyses alpha-D-glucose 1-phosphate + ATP + H(+) = ADP-alpha-D-glucose + diphosphate. It functions in the pathway glycan biosynthesis; starch biosynthesis. With respect to regulation, activated by 3'phosphoglycerate, inhibited by orthophosphate. Allosteric regulation. This protein plays a role in synthesis of starch. It catalyzes the synthesis of the activated glycosyl donor, ADP-glucose from Glc-1-P and ATP. This chain is Glucose-1-phosphate adenylyltransferase small subunit, chloroplastic/amyloplastic (AGPB1), found in Beta vulgaris (Sugar beet).